A 481-amino-acid polypeptide reads, in one-letter code: Protein nucleotidyltransferase YdiU (481 aa).

ATP-binding residues include G85, G87, R88, K108, D120, G121, R172, and R179. D248 serves as the catalytic Proton acceptor. N249 and D258 together coordinate Mg(2+). An ATP-binding site is contributed by D258.

This sequence belongs to the SELO family. Mg(2+) is required as a cofactor. Mn(2+) serves as cofactor.

It carries out the reaction L-seryl-[protein] + ATP = 3-O-(5'-adenylyl)-L-seryl-[protein] + diphosphate. The enzyme catalyses L-threonyl-[protein] + ATP = 3-O-(5'-adenylyl)-L-threonyl-[protein] + diphosphate. It catalyses the reaction L-tyrosyl-[protein] + ATP = O-(5'-adenylyl)-L-tyrosyl-[protein] + diphosphate. The catalysed reaction is L-histidyl-[protein] + UTP = N(tele)-(5'-uridylyl)-L-histidyl-[protein] + diphosphate. It carries out the reaction L-seryl-[protein] + UTP = O-(5'-uridylyl)-L-seryl-[protein] + diphosphate. The enzyme catalyses L-tyrosyl-[protein] + UTP = O-(5'-uridylyl)-L-tyrosyl-[protein] + diphosphate. Nucleotidyltransferase involved in the post-translational modification of proteins. It can catalyze the addition of adenosine monophosphate (AMP) or uridine monophosphate (UMP) to a protein, resulting in modifications known as AMPylation and UMPylation. This chain is Protein nucleotidyltransferase YdiU, found in Cereibacter sphaeroides (strain ATCC 17023 / DSM 158 / JCM 6121 / CCUG 31486 / LMG 2827 / NBRC 12203 / NCIMB 8253 / ATH 2.4.1.) (Rhodobacter sphaeroides).